A 262-amino-acid polypeptide reads, in one-letter code: Global transcriptional regulator CodY (262 aa).

The segment at 1–159 (MAHLLEKTRK…ASTVVGIQLL (159 aa)) is GAF domain. The segment at residues 207-226 (ASVIADRIGITRSVIVNALR) is a DNA-binding region (H-T-H motif).

Belongs to the CodY family.

The protein resides in the cytoplasm. In terms of biological role, DNA-binding global transcriptional regulator which is involved in the adaptive response to starvation and acts by directly or indirectly controlling the expression of numerous genes in response to nutrient availability. During rapid exponential growth, CodY is highly active and represses genes whose products allow adaptation to nutrient depletion. In Streptococcus pneumoniae (strain JJA), this protein is Global transcriptional regulator CodY.